The following is a 218-amino-acid chain: E3 ubiquitin-protein ligase MARCHF3 (218 aa).

An RING-CH-type zinc finger spans residues 63 to 123 (SPFNDRPMCR…ELCHFRFAVE (61 aa)). Zn(2+) is bound by residues Cys71, Cys74, Cys87, Cys89, His97, Cys100, Cys113, and Cys116. A run of 2 helical transmembrane segments spans residues 145–165 (LFGD…SGWL) and 180–200 (LEAV…LFWT).

As to quaternary structure, interacts with MARCHF2 and STX6.

The protein localises to the cytoplasmic vesicle membrane. Its subcellular location is the early endosome membrane. The enzyme catalyses S-ubiquitinyl-[E2 ubiquitin-conjugating enzyme]-L-cysteine + [acceptor protein]-L-lysine = [E2 ubiquitin-conjugating enzyme]-L-cysteine + N(6)-ubiquitinyl-[acceptor protein]-L-lysine.. The protein operates within protein modification; protein ubiquitination. In terms of biological role, E3 ubiquitin-protein ligase which may be involved in endosomal trafficking. E3 ubiquitin ligases accept ubiquitin from an E2 ubiquitin-conjugating enzyme in the form of a thioester and then directly transfer the ubiquitin to targeted substrates. The sequence is that of E3 ubiquitin-protein ligase MARCHF3 (Marchf3) from Mus musculus (Mouse).